Consider the following 51-residue polypeptide: Light-harvesting protein B-800/850 beta chain (51 aa).

Residues 2–23 are Cytoplasmic-facing; the sequence is ADDANKVWPSGLTTAEAEELQK. The helical transmembrane segment at 24-46 threads the bilayer; that stretch reads GLVDGTRVFGVIAVLAHILAYAY. His-40 contacts a bacteriochlorophyll. Residues 47-51 lie on the Periplasmic side of the membrane; sequence TPWLH.

It belongs to the antenna complex beta subunit family. An alpha/beta heterodimer conjugated to 3 bacteriochlorophyll molecules. The core complex is formed by different alpha and beta chains, binding bacteriochlorophyll molecules, and arranged most probably in tetrameric structures disposed around the reaction center. The non-pigmented gamma chains may constitute additional components.

It is found in the cell inner membrane. In terms of biological role, antenna complexes are light-harvesting systems, which transfer the excitation energy to the reaction centers. The polypeptide is Light-harvesting protein B-800/850 beta chain (pucB) (Rubrivivax gelatinosus (Rhodocyclus gelatinosus)).